The primary structure comprises 241 residues: tRNA (guanine-N(7)-)-methyltransferase B (241 aa).

S-adenosyl-L-methionine-binding residues include glycine 61, glutamate 84, arginine 86, asparagine 117, alanine 118, and leucine 137. Aspartate 140 is a catalytic residue. The interval 141–149 (PHFKKTKHK) is alphaC helix. Residues threonine 215 and glutamate 217 each coordinate S-adenosyl-L-methionine. The alpha6 helix stretch occupies residues 215–223 (TEEGKKVQR).

The protein belongs to the class I-like SAM-binding methyltransferase superfamily. TrmB family. As to quaternary structure, catalytic component of the METTL1-WDR4 complex, composed of mettl1 and wdr4.

It localises to the nucleus. The enzyme catalyses guanosine(46) in tRNA + S-adenosyl-L-methionine = N(7)-methylguanosine(46) in tRNA + S-adenosyl-L-homocysteine. It catalyses the reaction a guanosine in mRNA + S-adenosyl-L-methionine = an N(7)-methylguanosine in mRNA + S-adenosyl-L-homocysteine. The catalysed reaction is a guanosine in miRNA + S-adenosyl-L-methionine = an N(7)-methylguanosine in miRNA + S-adenosyl-L-homocysteine. Its pathway is tRNA modification; N(7)-methylguanine-tRNA biosynthesis. Functionally, catalytic component of METTL1-WDR4 methyltransferase complex that mediates the formation of N(7)-methylguanine in a subset of RNA species, such as tRNAs, mRNAs and microRNAs (miRNAs). Catalyzes the formation of N(7)-methylguanine at position 46 (m7G46) in a large subset of tRNAs that contain the 5'-RAGGU-3' motif within the variable loop. M7G46 interacts with C13-G22 in the D-loop to stabilize tRNA tertiary structure and protect tRNAs from decay. Also acts as a methyltransferase for a subset of internal N(7)-methylguanine in mRNAs. Internal N(7)-methylguanine methylation of mRNAs in response to stress promotes their relocalization to stress granules, thereby suppressing their translation. Also methylates a specific subset of miRNAs. This is tRNA (guanine-N(7)-)-methyltransferase B (mettl1-B) from Xenopus tropicalis (Western clawed frog).